The following is a 78-amino-acid chain: Large ribosomal subunit protein bL28 (78 aa).

The protein belongs to the bacterial ribosomal protein bL28 family.

The protein is Large ribosomal subunit protein bL28 of Legionella pneumophila (strain Paris).